A 491-amino-acid polypeptide reads, in one-letter code: Argininosuccinate lyase (491 aa).

The protein belongs to the lyase 1 family. Argininosuccinate lyase subfamily.

It is found in the cytoplasm. It catalyses the reaction 2-(N(omega)-L-arginino)succinate = fumarate + L-arginine. It functions in the pathway amino-acid biosynthesis; L-arginine biosynthesis; L-arginine from L-ornithine and carbamoyl phosphate: step 3/3. In Methanosarcina mazei (strain ATCC BAA-159 / DSM 3647 / Goe1 / Go1 / JCM 11833 / OCM 88) (Methanosarcina frisia), this protein is Argininosuccinate lyase.